The following is a 359-amino-acid chain: Peptide chain release factor 1 (359 aa).

Residue Gln-235 is modified to N5-methylglutamine.

It belongs to the prokaryotic/mitochondrial release factor family. Methylated by PrmC. Methylation increases the termination efficiency of RF1.

It is found in the cytoplasm. In terms of biological role, peptide chain release factor 1 directs the termination of translation in response to the peptide chain termination codons UAG and UAA. This is Peptide chain release factor 1 from Anaplasma marginale (strain Florida).